The primary structure comprises 495 residues: Aspartyl/glutamyl-tRNA(Asn/Gln) amidotransferase subunit B (495 aa).

It belongs to the GatB/GatE family. GatB subfamily. Heterotrimer of A, B and C subunits.

The enzyme catalyses L-glutamyl-tRNA(Gln) + L-glutamine + ATP + H2O = L-glutaminyl-tRNA(Gln) + L-glutamate + ADP + phosphate + H(+). The catalysed reaction is L-aspartyl-tRNA(Asn) + L-glutamine + ATP + H2O = L-asparaginyl-tRNA(Asn) + L-glutamate + ADP + phosphate + 2 H(+). In terms of biological role, allows the formation of correctly charged Asn-tRNA(Asn) or Gln-tRNA(Gln) through the transamidation of misacylated Asp-tRNA(Asn) or Glu-tRNA(Gln) in organisms which lack either or both of asparaginyl-tRNA or glutaminyl-tRNA synthetases. The reaction takes place in the presence of glutamine and ATP through an activated phospho-Asp-tRNA(Asn) or phospho-Glu-tRNA(Gln). This Methanosarcina acetivorans (strain ATCC 35395 / DSM 2834 / JCM 12185 / C2A) protein is Aspartyl/glutamyl-tRNA(Asn/Gln) amidotransferase subunit B.